We begin with the raw amino-acid sequence, 349 residues long: Isopentenyl-diphosphate delta-isomerase (349 aa).

Residue 6-7 participates in substrate binding; sequence RK. Residues 62–64, Ser-93, and Asn-122 contribute to the FMN site; that span reads AMT. Gln-152 is a binding site for substrate. Glu-153 lines the Mg(2+) pocket. FMN is bound by residues Lys-184, Thr-214, 258 to 259, and 280 to 281; these read GG and AG.

Belongs to the IPP isomerase type 2 family. In terms of assembly, homooctamer. Dimer of tetramers. The cofactor is FMN. NADPH is required as a cofactor. Mg(2+) serves as cofactor.

Its subcellular location is the cytoplasm. It catalyses the reaction isopentenyl diphosphate = dimethylallyl diphosphate. Functionally, involved in the biosynthesis of isoprenoids. Catalyzes the 1,3-allylic rearrangement of the homoallylic substrate isopentenyl (IPP) to its allylic isomer, dimethylallyl diphosphate (DMAPP). This is Isopentenyl-diphosphate delta-isomerase from Bacillus cereus (strain B4264).